Consider the following 226-residue polypeptide: Ribonuclease 3 (226 aa).

Positions 6–128 (INRLQRKLGY…LIGGVFLDSN (123 aa)) constitute an RNase III domain. Glu41 lines the Mg(2+) pocket. Asp45 is a catalytic residue. Mg(2+) is bound by residues Asp114 and Glu117. Glu117 is a catalytic residue. Residues 155–225 (DPKTRLQEYL…AEQALKKLEL (71 aa)) form the DRBM domain.

The protein belongs to the ribonuclease III family. Homodimer. It depends on Mg(2+) as a cofactor.

The protein resides in the cytoplasm. The enzyme catalyses Endonucleolytic cleavage to 5'-phosphomonoester.. Its function is as follows. Digests double-stranded RNA. Involved in the processing of primary rRNA transcript to yield the immediate precursors to the large and small rRNAs (23S and 16S). Processes some mRNAs, and tRNAs when they are encoded in the rRNA operon. Processes pre-crRNA and tracrRNA of type II CRISPR loci if present in the organism. This is Ribonuclease 3 from Salmonella enteritidis PT4 (strain P125109).